A 169-amino-acid chain; its full sequence is Thaumatin-like pathogenesis-related protein 3 (169 aa).

Positions 1–21 are cleaved as a signal peptide; sequence MATSSAVLFLLLAVFAAGASA.

Belongs to the thaumatin family.

Functionally, associated with resistance against stem rust fungi. This is Thaumatin-like pathogenesis-related protein 3 (RASTL-3) from Avena sativa (Oat).